The primary structure comprises 342 residues: Holliday junction branch migration complex subunit RuvB (342 aa).

The large ATPase domain (RuvB-L) stretch occupies residues 1 to 185 (MREDYLKSDD…FGINARLEYY (185 aa)). Residues Leu24, Arg25, Gly66, Lys69, Thr70, Thr71, 132–134 (EDY), Arg175, Tyr185, and Arg222 contribute to the ATP site. Thr70 is a Mg(2+) binding site. A small ATPAse domain (RuvB-S) region spans residues 186–256 (DAKLLTRIVQ…IARIALQALN (71 aa)). Residues 259–342 (HNGLDDMDNR…PPAQSGTLFE (84 aa)) form a head domain (RuvB-H) region. The DNA site is built by Arg314 and Arg319.

It belongs to the RuvB family. As to quaternary structure, homohexamer. Forms an RuvA(8)-RuvB(12)-Holliday junction (HJ) complex. HJ DNA is sandwiched between 2 RuvA tetramers; dsDNA enters through RuvA and exits via RuvB. An RuvB hexamer assembles on each DNA strand where it exits the tetramer. Each RuvB hexamer is contacted by two RuvA subunits (via domain III) on 2 adjacent RuvB subunits; this complex drives branch migration. In the full resolvosome a probable DNA-RuvA(4)-RuvB(12)-RuvC(2) complex forms which resolves the HJ.

It localises to the cytoplasm. The enzyme catalyses ATP + H2O = ADP + phosphate + H(+). Its function is as follows. The RuvA-RuvB-RuvC complex processes Holliday junction (HJ) DNA during genetic recombination and DNA repair, while the RuvA-RuvB complex plays an important role in the rescue of blocked DNA replication forks via replication fork reversal (RFR). RuvA specifically binds to HJ cruciform DNA, conferring on it an open structure. The RuvB hexamer acts as an ATP-dependent pump, pulling dsDNA into and through the RuvAB complex. RuvB forms 2 homohexamers on either side of HJ DNA bound by 1 or 2 RuvA tetramers; 4 subunits per hexamer contact DNA at a time. Coordinated motions by a converter formed by DNA-disengaged RuvB subunits stimulates ATP hydrolysis and nucleotide exchange. Immobilization of the converter enables RuvB to convert the ATP-contained energy into a lever motion, pulling 2 nucleotides of DNA out of the RuvA tetramer per ATP hydrolyzed, thus driving DNA branch migration. The RuvB motors rotate together with the DNA substrate, which together with the progressing nucleotide cycle form the mechanistic basis for DNA recombination by continuous HJ branch migration. Branch migration allows RuvC to scan DNA until it finds its consensus sequence, where it cleaves and resolves cruciform DNA. The protein is Holliday junction branch migration complex subunit RuvB of Cytophaga hutchinsonii (strain ATCC 33406 / DSM 1761 / CIP 103989 / NBRC 15051 / NCIMB 9469 / D465).